Consider the following 387-residue polypeptide: F-box protein DOR (387 aa).

The F-box domain occupies 19–64; it reads DENFEPIPIDLVIEIFSRSPVKSIARCRCVSKLWASILRLPYFTEL.

As to quaternary structure, part of a SCF (ASK-cullin-F-box) protein ligase complex. Interacts with ASK14 and CUL1. As to expression, strongly expressed in guard cells. Mostly represented in seedlings, leaves and flowers, and, to a lower extent, in roots and siliques.

It functions in the pathway protein modification; protein ubiquitination. Component of SCF(ASK-cullin-F-box) E3 ubiquitin ligase complexes, which may mediate the ubiquitination and subsequent proteasomal degradation of target proteins. Negative regulator of guard cell abscisic acid (ABA) signaling, especially during drought stress. The polypeptide is F-box protein DOR (DOR) (Arabidopsis thaliana (Mouse-ear cress)).